Here is a 212-residue protein sequence, read N- to C-terminus: Peptide methionine sulfoxide reductase MsrA (212 aa).

The segment covering 1 to 14 (MNSIDKTQRITQSD) has biased composition (polar residues). The segment at 1 to 21 (MNSIDKTQRITQSDALPGRST) is disordered. The active site involves cysteine 52.

Belongs to the MsrA Met sulfoxide reductase family.

The enzyme catalyses L-methionyl-[protein] + [thioredoxin]-disulfide + H2O = L-methionyl-(S)-S-oxide-[protein] + [thioredoxin]-dithiol. The catalysed reaction is [thioredoxin]-disulfide + L-methionine + H2O = L-methionine (S)-S-oxide + [thioredoxin]-dithiol. In terms of biological role, has an important function as a repair enzyme for proteins that have been inactivated by oxidation. Catalyzes the reversible oxidation-reduction of methionine sulfoxide in proteins to methionine. The polypeptide is Peptide methionine sulfoxide reductase MsrA (Pectobacterium atrosepticum (strain SCRI 1043 / ATCC BAA-672) (Erwinia carotovora subsp. atroseptica)).